The chain runs to 57 residues: Aminopeptidase A (57 aa).

Residues 1–57 (YLTDHYFKVDLNSTVTQQRFLLDPSELAGITIMQPSDSNIEWLKQYRDDVATWLENS) lie on the Extracellular side of the membrane. Residue N12 is glycosylated (N-linked (GlcNAc...) asparagine).

This sequence belongs to the peptidase M1 family. In terms of assembly, homodimer; disulfide-linked. Zn(2+) is required as a cofactor.

The protein localises to the cell membrane. It catalyses the reaction Release of N-terminal glutamate (and to a lesser extent aspartate) from a peptide.. Inhibited by the aminopeptidase competitive inhibitors amastatin (Leu and acidic inhibitor), and bestatin (Leu inhibitor), by chelating agents EDTA, and 1,10-Phenanthroline, as well as by Zn(2+) ions. Substrate specificity is modulated by Ca(2+), Ba(2+), and Mn(2+) ions which enhances the enzymatic activity for cleavage of acidic residues. In terms of biological role, venom protein that cleaves N-terminal acidic residues from peptides with high potency in presence of calcium. It may have several roles in venom including alteration of blood pressure by cleaving circulating angiotensin-2, general degradation of host tissue, increase of permeability to other venom components, and/or processing of other toxins in the venom. The sequence is that of Aminopeptidase A from Gloydius blomhoffii (Mamushi).